We begin with the raw amino-acid sequence, 674 residues long: tRNA wybutosine-synthesizing protein 4 (674 aa).

Residues Arg-84, Gly-109, Asp-140, 184-185 (DL), and Glu-212 each bind S-adenosyl-L-methionine.

It belongs to the methyltransferase superfamily. LCMT family.

It carries out the reaction 7-[(3S)-3-amino-3-carboxypropyl]wyosine(37) in tRNA(Phe) + S-adenosyl-L-methionine = 7-[(3S)-(3-amino-3-methoxycarbonyl)propyl]wyosine(37) in tRNA(Phe) + S-adenosyl-L-homocysteine. The catalysed reaction is 7-[(3S)-(3-amino-3-methoxycarbonyl)propyl]wyosine(37) in tRNA(Phe) + S-adenosyl-L-methionine + CO2 = wybutosine(37) in tRNA(Phe) + S-adenosyl-L-homocysteine + 2 H(+). It participates in tRNA modification; wybutosine-tRNA(Phe) biosynthesis. In terms of biological role, probable S-adenosyl-L-methionine-dependent methyltransferase that acts as a component of the wybutosine biosynthesis pathway. Wybutosine is a hyper modified guanosine with a tricyclic base found at the 3'-position adjacent to the anticodon of eukaryotic phenylalanine tRNA. May methylate the carboxyl group of leucine residues to form alpha-leucine ester residues. The sequence is that of tRNA wybutosine-synthesizing protein 4 (PPM2) from Candida glabrata (strain ATCC 2001 / BCRC 20586 / JCM 3761 / NBRC 0622 / NRRL Y-65 / CBS 138) (Yeast).